Consider the following 101-residue polypeptide: Large ribosomal subunit protein bL25 (101 aa).

Belongs to the bacterial ribosomal protein bL25 family. In terms of assembly, part of the 50S ribosomal subunit; part of the 5S rRNA/L5/L18/L25 subcomplex. Contacts the 5S rRNA. Binds to the 5S rRNA independently of L5 and L18.

Functionally, this is one of the proteins that binds to the 5S RNA in the ribosome where it forms part of the central protuberance. In Thermosynechococcus vestitus (strain NIES-2133 / IAM M-273 / BP-1), this protein is Large ribosomal subunit protein bL25.